The following is a 795-amino-acid chain: Phospholipase A-2-activating protein (795 aa).

WD repeat units follow at residues 17-56 (HELD…RGFT), 63-107 (GHSN…PLYI), 110-148 (GHKD…MTLQ), 149-188 (GHTA…RTFS), 190-227 (HEDC…LGVY), 229-268 (GHTN…QTIR), and 270-307 (PAQS…TASA). Phosphoserine is present on S50. The 100-residue stretch at 366–465 (QWSVSDGRWI…KGQTLGLGNT (100 aa)) folds into the PFU domain. The residue at position 529 (K529) is an N6-acetyllysine. The 262-residue stretch at 533–794 (IYFPKKEALT…SECCRLILNL (262 aa)) folds into the PUL domain. ARM repeat units follow at residues 546–588 (ANPT…GNAS), 589–620 (EKPT…LRLS), 621–669 (IKHP…CFVS), 670–715 (QAGQ…CFHK), 716–755 (DHNI…LISD), and 756–795 (DSNA…LNLL).

Belongs to the WD repeat PLAP family. In terms of assembly, interacts with ubiquitin. Interacts with UBXN6, VCP and YOD1; may form a complex involved in macroautophagy.

It is found in the nucleus. The protein resides in the cytoplasm. Its subcellular location is the synapse. Functionally, plays a role in protein ubiquitination, sorting and degradation through its association with VCP. Involved in ubiquitin-mediated membrane proteins trafficking to late endosomes in an ESCRT-dependent manner, and hence plays a role in synaptic vesicle recycling. May play a role in macroautophagy, regulating for instance the clearance of damaged lysosomes. Plays a role in cerebellar Purkinje cell development. Positively regulates cytosolic and calcium-independent phospholipase A2 activities in a tumor necrosis factor alpha (TNF-alpha)- or lipopolysaccharide (LPS)-dependent manner, and hence prostaglandin E2 biosynthesis. The sequence is that of Phospholipase A-2-activating protein (Plaa) from Rattus norvegicus (Rat).